We begin with the raw amino-acid sequence, 342 residues long: Glycerol-1-phosphate dehydrogenase [NAD(P)+] (342 aa).

NAD(+) is bound by residues 84 to 88 and 106 to 109; these read GRPLD and TSAS. Asp111 contributes to the substrate binding site. An NAD(+)-binding site is contributed by Ser115. A substrate-binding site is contributed by Asp160. Zn(2+) is bound by residues Asp160 and His241. His245 serves as a coordination point for substrate. Residue His260 participates in Zn(2+) binding.

Belongs to the glycerol-1-phosphate dehydrogenase family. As to quaternary structure, homodimer. Requires Zn(2+) as cofactor.

The protein localises to the cytoplasm. It catalyses the reaction sn-glycerol 1-phosphate + NAD(+) = dihydroxyacetone phosphate + NADH + H(+). The enzyme catalyses sn-glycerol 1-phosphate + NADP(+) = dihydroxyacetone phosphate + NADPH + H(+). It functions in the pathway membrane lipid metabolism; glycerophospholipid metabolism. In terms of biological role, catalyzes the NAD(P)H-dependent reduction of dihydroxyacetonephosphate (DHAP or glycerone phosphate) to glycerol 1-phosphate (G1P). The G1P thus generated is used as the glycerophosphate backbone of phospholipids in the cellular membranes of Archaea. The sequence is that of Glycerol-1-phosphate dehydrogenase [NAD(P)+] from Pyrobaculum neutrophilum (strain DSM 2338 / JCM 9278 / NBRC 100436 / V24Sta) (Thermoproteus neutrophilus).